The primary structure comprises 85 residues: U4-theraphotoxin-Hhn1f (85 aa).

Residues Met1–Ala22 form the signal peptide. Residues Glu23–Arg48 constitute a propeptide that is removed on maturation. A disulfide bond links Cys71 and Cys82.

Belongs to the neurotoxin 12 (Hwtx-2) family. 02 (Hwtx-2) subfamily. In terms of tissue distribution, expressed by the venom gland.

The protein resides in the secreted. Postsynaptic neurotoxin. This is U4-theraphotoxin-Hhn1f from Cyriopagopus hainanus (Chinese bird spider).